We begin with the raw amino-acid sequence, 125 residues long: Large ribosomal subunit protein bL12 (125 aa).

The protein belongs to the bacterial ribosomal protein bL12 family. As to quaternary structure, homodimer. Part of the 50S ribosomal subunit; present in 6 copies per ribosome. Forms part of the ribosomal stalk which helps the ribosome interact with GTP-bound translation factors. Forms a heptameric L10(L12)2(L12)2(L12)2 complex, where L10 forms an elongated spine to which 3 L12 dimers bind in a sequential fashion.

Its function is as follows. Forms part of the ribosomal stalk which helps the ribosome interact with GTP-bound translation factors. Is thus essential for accurate translation. In Agrobacterium fabrum (strain C58 / ATCC 33970) (Agrobacterium tumefaciens (strain C58)), this protein is Large ribosomal subunit protein bL12.